Consider the following 186-residue polypeptide: Elongation factor P (186 aa).

The protein belongs to the elongation factor P family.

It localises to the cytoplasm. The protein operates within protein biosynthesis; polypeptide chain elongation. Its function is as follows. Involved in peptide bond synthesis. Stimulates efficient translation and peptide-bond synthesis on native or reconstituted 70S ribosomes in vitro. Probably functions indirectly by altering the affinity of the ribosome for aminoacyl-tRNA, thus increasing their reactivity as acceptors for peptidyl transferase. The sequence is that of Elongation factor P from Coprothermobacter proteolyticus (strain ATCC 35245 / DSM 5265 / OCM 4 / BT).